A 427-amino-acid chain; its full sequence is Glucose-6-phosphate isomerase (427 aa).

Glu-281 functions as the Proton donor in the catalytic mechanism. Residues His-302 and Lys-417 contribute to the active site.

Belongs to the GPI family.

The protein resides in the cytoplasm. It carries out the reaction alpha-D-glucose 6-phosphate = beta-D-fructose 6-phosphate. Its pathway is carbohydrate biosynthesis; gluconeogenesis. The protein operates within carbohydrate degradation; glycolysis; D-glyceraldehyde 3-phosphate and glycerone phosphate from D-glucose: step 2/4. In terms of biological role, catalyzes the reversible isomerization of glucose-6-phosphate to fructose-6-phosphate. This Mycoplasmopsis pulmonis (strain UAB CTIP) (Mycoplasma pulmonis) protein is Glucose-6-phosphate isomerase.